Here is a 690-residue protein sequence, read N- to C-terminus: Long-chain fatty acid transport protein 5 (690 aa).

Topologically, residues 1–30 (MGVRQQLALLLLLLLLLWGLGQPVWPVAVA) are cytoplasmic. 2 consecutive transmembrane segments (helical) span residues 31-51 (LTLRWLLGDPTCCVLLGLAML) and 56-76 (LGPWVPHGLSLAAAALALTLL). At 77–690 (PARLPPGLRW…QAVCEGTWRL (614 aa)) the chain is on the cytoplasmic side. AMP is bound at residue 292 to 303 (FIYTSGTTGLPK). S501 is subject to Phosphoserine.

It belongs to the ATP-dependent AMP-binding enzyme family. Predominantly expressed in liver.

The protein resides in the endoplasmic reticulum membrane. Its subcellular location is the microsome. It is found in the cell membrane. It catalyses the reaction a fatty acid(in) = a fatty acid(out). The enzyme catalyses cholate + ATP + CoA = choloyl-CoA + AMP + diphosphate. It carries out the reaction chenodeoxycholate + ATP + CoA = chenodeoxycholoyl-CoA + AMP + diphosphate. The catalysed reaction is deoxycholate + ATP + CoA = deoxycholoyl-CoA + AMP + diphosphate. It catalyses the reaction lithocholate + ATP + CoA = lithocholoyl-CoA + AMP + diphosphate. The enzyme catalyses (25R)-3alpha,7alpha,12alpha-trihydroxy-5beta-cholestan-26-oate + ATP + CoA = (25R)-3alpha,7alpha,12alpha-trihydroxy-5beta-cholestan-26-oyl-CoA + AMP + diphosphate. It carries out the reaction a very long-chain fatty acid + ATP + CoA = a very long-chain fatty acyl-CoA + AMP + diphosphate. The catalysed reaction is tetracosanoate + ATP + CoA = tetracosanoyl-CoA + AMP + diphosphate. It catalyses the reaction hexacosanoate + ATP + CoA = hexacosanoyl-CoA + AMP + diphosphate. The enzyme catalyses a long-chain fatty acid + ATP + CoA = a long-chain fatty acyl-CoA + AMP + diphosphate. It carries out the reaction octadecanoate + ATP + CoA = octadecanoyl-CoA + AMP + diphosphate. The catalysed reaction is eicosanoate + ATP + CoA = eicosanoyl-CoA + AMP + diphosphate. Its activity is regulated as follows. 3-alpha,7-alpha,12-alpha-trihydroxy-5-beta-cholestanate (THCA) inhibits the activation of cholate. In terms of biological role, may mediate the import of long-chain fatty acids (LCFA) by facilitating their transport across cell membranes. Also catalyzes the ATP-dependent formation of fatty acyl-CoA using LCFA and very-long-chain fatty acids (VLCFA) as substrates. Mainly functions as a bile acyl-CoA synthetase catalyzing the activation of bile acids via ATP-dependent formation of bile acid CoA thioesters which is necessary for their subsequent conjugation with glycine or taurine. Both primary bile acids (cholic acid and chenodeoxycholic acid) and secondary bile acids (deoxycholic acid and lithocholic acid) are the principal substrates. In vitro, activates 3-alpha,7-alpha,12-alpha-trihydroxy-5-beta-cholestanate ((25R)-3alpha,7alpha,12alpha-trihydroxy-5beta-cholestan-26-oate or THCA), the C27 precursor of cholic acid deriving from the de novo synthesis from cholesterol. Plays an important role in hepatic fatty acid uptake and bile acid reconjugation and recycling but not in de novo synthesis of bile acids. The chain is Long-chain fatty acid transport protein 5 (SLC27A5) from Homo sapiens (Human).